Reading from the N-terminus, the 165-residue chain is Hemolysin, heat labile (165 aa).

A disulfide bridge links cysteine 151 with cysteine 161.

It belongs to the TDH hemolysin family. In terms of assembly, homodimer.

Bacterial hemolysins are exotoxins that attack blood cell membranes and cause cell rupture by mechanisms not clearly defined. The sequence is that of Hemolysin, heat labile from Grimontia hollisae (Vibrio hollisae).